The sequence spans 59 residues: Small, acid-soluble spore protein H (59 aa).

It belongs to the SspH family.

The protein resides in the spore core. This is Small, acid-soluble spore protein H from Bacillus thuringiensis subsp. konkukian (strain 97-27).